Consider the following 95-residue polypeptide: MTKDRRAALVRITGRVQGVCFRDWTREEAERLGLDGWVRNESDGSVTALIAGPDGAVSRMLDHFWKGPPGASVADVASEEASSAEAPAGFRITRG.

The Acylphosphatase-like domain maps to 7-94 (AALVRITGRV…EAPAGFRITR (88 aa)). Catalysis depends on residues R22 and N40. Over residues 76-88 (VASEEASSAEAPA) the composition is skewed to low complexity. Positions 76–95 (VASEEASSAEAPAGFRITRG) are disordered.

Belongs to the acylphosphatase family.

It carries out the reaction an acyl phosphate + H2O = a carboxylate + phosphate + H(+). In Rhizobium meliloti (strain 1021) (Ensifer meliloti), this protein is Acylphosphatase (acyP).